The primary structure comprises 802 residues: Endoplasmin (802 aa).

Positions 1 to 21 (MRVLWVLGLCCVLLTFGFVRA) are cleaved as a signal peptide. The short motif at 42–44 (SRT) is the SRT pseudosubstrate motif element. An N-linked (GlcNAc...) asparagine glycan is attached at Asn-62. Residue Ser-64 is modified to Phosphoserine. Asn-107 is a glycosylation site (N-linked (GlcNAc...) asparagine). ATP contacts are provided by Asn-107, Asp-149, and Asn-162. Lys-168 carries the N6-(2-hydroxyisobutyryl)lysine modification. Phosphoserine is present on Ser-172. ATP is bound at residue Phe-199. An N-linked (GlcNAc...) asparagine glycan is attached at Asn-217. A compositionally biased stretch (acidic residues) spans 290 to 317 (EEPLEEDEAAKEEKEESDDEAAVEEEEE). Residues 290-323 (EEPLEEDEAAKEEKEESDDEAAVEEEEEEKKPKT) are disordered. Residues Ser-306 and Ser-403 each carry the phosphoserine modification. Residue Lys-404 is modified to N6-succinyllysine. An N-linked (GlcNAc...) asparagine glycan is attached at Asn-445. Residue Ser-447 is modified to Phosphoserine. Lys-479 is subject to N6-acetyllysine. N-linked (GlcNAc...) asparagine glycans are attached at residues Asn-481 and Asn-502. Residue Lys-633 is modified to N6-succinyllysine. The disordered stretch occupies residues 749-802 (IDPEAQVEEEPEEEPEDTSEDAEDSEQDEGEEMDAGTEEEEEETEKESTEKDEL). The span at 753 to 793 (AQVEEEPEEEPEDTSEDAEDSEQDEGEEMDAGTEEEEEETE) shows a compositional bias: acidic residues. Thr-785 is modified (phosphothreonine). The Prevents secretion from ER signature appears at 799–802 (KDEL).

It belongs to the heat shock protein 90 family. Homodimer; disulfide-linked. Component of an EIF2 complex at least composed of CELF1/CUGBP1, CALR, CALR3, EIF2S1, EIF2S2, HSP90B1 and HSPA5. Part of a large chaperone multiprotein complex comprising DNAJB11, HSP90B1, HSPA5, HYOU, PDIA2, PDIA4, PDIA6, PPIB, SDF2L1, UGGT1 and very small amounts of ERP29, but not, or at very low levels, CALR nor CANX. Hyperglycosylated form interacts with OS9; promoting its degradation by the endoplasmic reticulum associated degradation (ERAD). Interacts with AIMP1; regulates its retention in the endoplasmic reticulum. Interacts with CNPY3; this interaction is disrupted in the presence of ATP. Interacts with TLR4, TLR9 and TLR11, but not with TLR3. Interacts with MZB1 in a calcium-dependent manner. Interacts with METTL23. Interacts with IL1B; the interaction facilitates cargo translocation into the ERGIC. Interacts with EIF2AK3. Phosphorylated by CK2. Post-translationally, N-glycosylated cotranslationally at Asn-217 by STT3A-containing OST-A complex: this glycosylation is constitutive. In response to various stress, 5 additional facultative sites (Asn-62, Asn-107, Asn-445, Asn-481 and Asn-502) can be glycosylated post-translationally by STT3B-containing OST-B complex, leading to a hyperglycosylated form that is degraded by the ER-associated degradation (ERAD) pathway. In normal conditions, the OST-A complex together with CCDC134 prevent glycosylation at facultative sites during protein folding, thereby preventing hyperglycosylation. Mechanistically, nascent HSP90B1 is tethered during translation to a specialized CCDC134-containing translocon that forms a microenvironment for its folding, in which STT3A associates with the SRT pseudosubstrate motif, and prevents access to facultative glycosylation sites until folding is completed, rendering its facultative sites inaccessible to the OST-B complex.

Its subcellular location is the endoplasmic reticulum lumen. It localises to the sarcoplasmic reticulum lumen. It is found in the melanosome. It carries out the reaction ATP + H2O = ADP + phosphate + H(+). In terms of biological role, ATP-dependent chaperone involved in the processing of proteins in the endoplasmic reticulum, regulating their transport. Together with MESD, acts as a modulator of the Wnt pathway by promoting the folding of LRP6, a coreceptor of the canonical Wnt pathway. When associated with CNPY3, required for proper folding of Toll-like receptors. Promotes folding and trafficking of TLR4 to the cell surface. May participate in the unfolding of cytosolic leaderless cargos (lacking the secretion signal sequence) such as the interleukin 1/IL-1 to facilitate their translocation into the ERGIC (endoplasmic reticulum-Golgi intermediate compartment) and secretion; the translocation process is mediated by the cargo receptor TMED10. The chain is Endoplasmin (Hsp90b1) from Mus musculus (Mouse).